A 734-amino-acid polypeptide reads, in one-letter code: Photosystem I P700 chlorophyll a apoprotein A2 (734 aa).

8 consecutive transmembrane segments (helical) span residues Ile-46–Ala-69, Leu-135–Gln-158, Leu-175–Ile-199, Ile-273–Tyr-291, Leu-330–Tyr-353, Ala-369–Val-395, Ala-417–His-439, and Phe-517–Val-535. Cys-559 and Cys-568 together coordinate [4Fe-4S] cluster. The next 2 helical transmembrane spans lie at Ala-575 to Trp-596 and Gln-643 to Ile-665. Residues His-654, Met-662, and Tyr-670 each contribute to the chlorophyll a site. Trp-671 lines the phylloquinone pocket. A helical transmembrane segment spans residues Leu-707–Ala-727.

This sequence belongs to the PsaA/PsaB family. As to quaternary structure, the PsaA/B heterodimer binds the P700 chlorophyll special pair and subsequent electron acceptors. PSI consists of a core antenna complex that captures photons, and an electron transfer chain that converts photonic excitation into a charge separation. The eukaryotic PSI reaction center is composed of at least 11 subunits. It depends on P700 is a chlorophyll a/chlorophyll a' dimer, A0 is one or more chlorophyll a, A1 is one or both phylloquinones and FX is a shared 4Fe-4S iron-sulfur center. as a cofactor.

The protein resides in the plastid. It localises to the chloroplast thylakoid membrane. The enzyme catalyses reduced [plastocyanin] + hnu + oxidized [2Fe-2S]-[ferredoxin] = oxidized [plastocyanin] + reduced [2Fe-2S]-[ferredoxin]. Functionally, psaA and PsaB bind P700, the primary electron donor of photosystem I (PSI), as well as the electron acceptors A0, A1 and FX. PSI is a plastocyanin/cytochrome c6-ferredoxin oxidoreductase, converting photonic excitation into a charge separation, which transfers an electron from the donor P700 chlorophyll pair to the spectroscopically characterized acceptors A0, A1, FX, FA and FB in turn. Oxidized P700 is reduced on the lumenal side of the thylakoid membrane by plastocyanin or cytochrome c6. This chain is Photosystem I P700 chlorophyll a apoprotein A2, found in Emiliania huxleyi (Coccolithophore).